Here is a 354-residue protein sequence, read N- to C-terminus: Holliday junction branch migration complex subunit RuvB (354 aa).

Polar residues predominate over residues 1–10; sequence MAIKRNQGSN. The interval 1–36 is disordered; the sequence is MAIKRNQGSNPKPEKKERLTKAETHQEQDNLEESIR. Residues 12 to 36 are compositionally biased toward basic and acidic residues; the sequence is KPEKKERLTKAETHQEQDNLEESIR. The large ATPase domain (RuvB-L) stretch occupies residues 13–196; it reads PEKKERLTKA…FGLIQRLKFY (184 aa). ATP-binding positions include I35, R36, G77, K80, T81, T82, 143–145, R186, Y196, and R233; that span reads EDY. Mg(2+) is bound at residue T81. The segment at 197-267 is small ATPAse domain (RuvB-S); sequence EPEELALIIK…LAAEALDIYQ (71 aa). Residues 270 to 354 form a head domain (RuvB-H) region; that stretch reads PQGLDWTDRL…EEQLSIFSEQ (85 aa). DNA contacts are provided by R325 and R330.

It belongs to the RuvB family. In terms of assembly, homohexamer. Forms an RuvA(8)-RuvB(12)-Holliday junction (HJ) complex. HJ DNA is sandwiched between 2 RuvA tetramers; dsDNA enters through RuvA and exits via RuvB. An RuvB hexamer assembles on each DNA strand where it exits the tetramer. Each RuvB hexamer is contacted by two RuvA subunits (via domain III) on 2 adjacent RuvB subunits; this complex drives branch migration. In the full resolvosome a probable DNA-RuvA(4)-RuvB(12)-RuvC(2) complex forms which resolves the HJ.

The protein resides in the cytoplasm. It carries out the reaction ATP + H2O = ADP + phosphate + H(+). The RuvA-RuvB-RuvC complex processes Holliday junction (HJ) DNA during genetic recombination and DNA repair, while the RuvA-RuvB complex plays an important role in the rescue of blocked DNA replication forks via replication fork reversal (RFR). RuvA specifically binds to HJ cruciform DNA, conferring on it an open structure. The RuvB hexamer acts as an ATP-dependent pump, pulling dsDNA into and through the RuvAB complex. RuvB forms 2 homohexamers on either side of HJ DNA bound by 1 or 2 RuvA tetramers; 4 subunits per hexamer contact DNA at a time. Coordinated motions by a converter formed by DNA-disengaged RuvB subunits stimulates ATP hydrolysis and nucleotide exchange. Immobilization of the converter enables RuvB to convert the ATP-contained energy into a lever motion, pulling 2 nucleotides of DNA out of the RuvA tetramer per ATP hydrolyzed, thus driving DNA branch migration. The RuvB motors rotate together with the DNA substrate, which together with the progressing nucleotide cycle form the mechanistic basis for DNA recombination by continuous HJ branch migration. Branch migration allows RuvC to scan DNA until it finds its consensus sequence, where it cleaves and resolves cruciform DNA. The protein is Holliday junction branch migration complex subunit RuvB of Crocosphaera subtropica (strain ATCC 51142 / BH68) (Cyanothece sp. (strain ATCC 51142)).